We begin with the raw amino-acid sequence, 394 residues long: GDNF family receptor alpha-like (394 aa).

The N-terminal stretch at 1–18 is a signal peptide; it reads MIVFIFLAMGLSLENEYT. Residues 19-351 are Extracellular-facing; sequence SQTNNCTYLR…TGFHSPFNGE (333 aa). N-linked (GlcNAc...) asparagine glycans are attached at residues N23, N50, N62, N67, N103, and N116. Disulfide bonds link C131/C189, C138/C144, C155/C167, C162/C210, C191/C198, C220/C291, C227/C233, C244/C275, C252/C258, C269/C316, and C293/C304. The interval 149–228 is required for interaction with GDF15; the sequence is ASYLKACSAN…TCLSVIRSCQ (80 aa). A helical transmembrane segment spans residues 352-371; that stretch reads VIYAAMCMTVTCGILLLVMV. At 372–394 the chain is on the cytoplasmic side; that stretch reads KLRTSRISSKARDPSSIQIPGEL.

It belongs to the GDNFR family. Interacts (via the extracellular domain) with GDF15 and RET; receptor of GDF15, mediates cellular signaling through interaction with RET after GDF15-binding. Interaction with RET requires previous GDF15-binding. In terms of processing, cleaved and inactivated by MMP14, inhibiting the GDF15-GFRAL aversive response. In terms of tissue distribution, expressed in the brainstem, restricted to cells in the area postrema and the immediately adjacent region of the nucleus tractus solitarius (at protein level). Detected at low levels in testis and adipose tissue.

Its subcellular location is the cell membrane. With respect to regulation, specifically inhibited by 3P10 monoclonal antibody. Strongly activated by LY3463251, a long-acting and stable agonist composed of GDF15 conjugated monomeric human IgG4 Fc. Its function is as follows. Brainstem-restricted receptor for GDF15 hormone, which triggers an aversive response, characterized by nausea, vomiting, and/or loss of appetite in response to various stresses. The aversive response is both required to reduce continuing exposure to those stresses at the time of exposure and to promote avoidance behavior in the future. The GDF15-GFRAL aversive response is triggered by stresses, such as anticancer drugs (camptothecin or cisplatin), cancers or drugs such as metformin. Upon interaction with its ligand, GDF15, mediates the GDF15-induced autophosphorylation and activation of the RET tyrosine kinase receptor, leading to activation of MAPK- and AKT- signaling pathways. Ligand-binding activates GFRAL-expressing neurons localized in the area postrema and nucleus tractus solitarius of the brainstem. The GDF15-GFRAL signal induces expression of genes involved in metabolism, such as lipid metabolism in adipose tissues. This is GDNF family receptor alpha-like from Homo sapiens (Human).